Reading from the N-terminus, the 319-residue chain is Peroxidase 13 (319 aa).

The N-terminal stretch at 1 to 22 is a signal peptide; that stretch reads MITIALFLVLLYFHDQLGYSAA. 4 disulfide bridges follow: cysteine 33–cysteine 111, cysteine 66–cysteine 71, cysteine 117–cysteine 315, and cysteine 196–cysteine 222. Histidine 64 (proton acceptor) is an active-site residue. Ca(2+)-binding residues include aspartate 65, valine 68, glycine 70, aspartate 72, and serine 74. Proline 158 lines the substrate pocket. Histidine 189 is a heme b binding site. Residue threonine 190 participates in Ca(2+) binding. Residues aspartate 235, serine 238, and aspartate 243 each coordinate Ca(2+). Asparagine 280 is a glycosylation site (N-linked (GlcNAc...) asparagine).

It belongs to the peroxidase family. Classical plant (class III) peroxidase subfamily. Requires heme b as cofactor. The cofactor is Ca(2+).

It is found in the secreted. It catalyses the reaction 2 a phenolic donor + H2O2 = 2 a phenolic radical donor + 2 H2O. In terms of biological role, removal of H(2)O(2), oxidation of toxic reductants, biosynthesis and degradation of lignin, suberization, auxin catabolism, response to environmental stresses such as wounding, pathogen attack and oxidative stress. These functions might be dependent on each isozyme/isoform in each plant tissue. This chain is Peroxidase 13 (PER13), found in Arabidopsis thaliana (Mouse-ear cress).